Here is a 239-residue protein sequence, read N- to C-terminus: Ribonuclease PH (239 aa).

Residues R87 and G125 to R127 contribute to the phosphate site.

Belongs to the RNase PH family. Homohexameric ring arranged as a trimer of dimers.

It catalyses the reaction tRNA(n+1) + phosphate = tRNA(n) + a ribonucleoside 5'-diphosphate. Functionally, phosphorolytic 3'-5' exoribonuclease that plays an important role in tRNA 3'-end maturation. Removes nucleotide residues following the 3'-CCA terminus of tRNAs; can also add nucleotides to the ends of RNA molecules by using nucleoside diphosphates as substrates, but this may not be physiologically important. Probably plays a role in initiation of 16S rRNA degradation (leading to ribosome degradation) during starvation. The polypeptide is Ribonuclease PH (Azotobacter vinelandii (strain DJ / ATCC BAA-1303)).